The chain runs to 362 residues: Molybdenum import ATP-binding protein ModC (362 aa).

The region spanning 2 to 236 (VSPIEVRLQM…LDLPLAMGDD (235 aa)) is the ABC transporter domain. 34–41 (GPSGSGKT) contributes to the ATP binding site. Residues 297–362 (HSSILNRLPV…AQIKAVAVLA (66 aa)) enclose the Mop domain.

The protein belongs to the ABC transporter superfamily. Molybdate importer (TC 3.A.1.8) family. As to quaternary structure, the complex is composed of two ATP-binding proteins (ModC), two transmembrane proteins (ModB) and a solute-binding protein (ModA).

The protein localises to the cell inner membrane. The catalysed reaction is molybdate(out) + ATP + H2O = molybdate(in) + ADP + phosphate + H(+). Functionally, part of the ABC transporter complex ModABC involved in molybdenum import. Responsible for energy coupling to the transport system. This Pseudomonas syringae pv. tomato (strain ATCC BAA-871 / DC3000) protein is Molybdenum import ATP-binding protein ModC.